Reading from the N-terminus, the 149-residue chain is Nucleoside diphosphate kinase (149 aa).

ATP is bound by residues K9, F57, R85, T91, R102, and N112. The active-site Pros-phosphohistidine intermediate is the H115.

Belongs to the NDK family. As to quaternary structure, homotetramer. It depends on Mg(2+) as a cofactor.

It is found in the cytoplasm. It catalyses the reaction dZDP + ATP = dZTP + ADP. It carries out the reaction a 2'-deoxyribonucleoside 5'-diphosphate + ATP = a 2'-deoxyribonucleoside 5'-triphosphate + ADP. The enzyme catalyses a ribonucleoside 5'-diphosphate + ATP = a ribonucleoside 5'-triphosphate + ADP. It functions in the pathway purine metabolism. In terms of biological role, major role in the synthesis of nucleoside triphosphates other than ATP. The ATP gamma phosphate is transferred to the NDP beta phosphate via a ping-pong mechanism, using a phosphorylated active-site intermediate. Functionally, (Microbial infection) Catalyzes the phosphorylation of dZDP to dZTP, when the bacterium is infected by a phage that produces the substrate for the synthesis of dZTP (2- amino-2'-deoxyadenosine 5'-triphosphate), which is then used by the phage as a DNA polymerase substrate. The polypeptide is Nucleoside diphosphate kinase (Synechococcus sp. (strain JA-3-3Ab) (Cyanobacteria bacterium Yellowstone A-Prime)).